Here is a 261-residue protein sequence, read N- to C-terminus: uncharacterized protein (261 aa).

Helical transmembrane passes span 15–35 (WYSV…IIVC), 87–107 (VYLI…IRNA), and 131–151 (LLLY…YFLI). Over residues 234-246 (LEEKKAKRRQNAE) the composition is skewed to basic and acidic residues. The disordered stretch occupies residues 234–261 (LEEKKAKRRQNAERRKKRREIAMEQREQ).

It is found in the membrane. This is an uncharacterized protein from Caenorhabditis elegans.